The chain runs to 499 residues: Phenylalanine--tRNA ligase alpha subunit (499 aa).

L-phenylalanine contacts are provided by residues Thr-342, 381 to 383, and Phe-422; that span reads QID. Glu-424 serves as a coordination point for Mg(2+). Phe-447 contacts L-phenylalanine.

The protein belongs to the class-II aminoacyl-tRNA synthetase family. Phe-tRNA synthetase alpha subunit type 2 subfamily. Tetramer of two alpha and two beta subunits. Requires Mg(2+) as cofactor.

It is found in the cytoplasm. The catalysed reaction is tRNA(Phe) + L-phenylalanine + ATP = L-phenylalanyl-tRNA(Phe) + AMP + diphosphate + H(+). This chain is Phenylalanine--tRNA ligase alpha subunit, found in Pyrococcus horikoshii (strain ATCC 700860 / DSM 12428 / JCM 9974 / NBRC 100139 / OT-3).